The sequence spans 172 residues: 3-hydroxydecanoyl-[acyl-carrier-protein] dehydratase (172 aa).

Histidine 71 is a catalytic residue.

It belongs to the thioester dehydratase family. FabA subfamily. In terms of assembly, homodimer.

Its subcellular location is the cytoplasm. It catalyses the reaction a (3R)-hydroxyacyl-[ACP] = a (2E)-enoyl-[ACP] + H2O. The enzyme catalyses (3R)-hydroxydecanoyl-[ACP] = (2E)-decenoyl-[ACP] + H2O. It carries out the reaction (2E)-decenoyl-[ACP] = (3Z)-decenoyl-[ACP]. It functions in the pathway lipid metabolism; fatty acid biosynthesis. In terms of biological role, necessary for the introduction of cis unsaturation into fatty acids. Catalyzes the dehydration of (3R)-3-hydroxydecanoyl-ACP to E-(2)-decenoyl-ACP and then its isomerization to Z-(3)-decenoyl-ACP. Can catalyze the dehydratase reaction for beta-hydroxyacyl-ACPs with saturated chain lengths up to 16:0, being most active on intermediate chain length. This chain is 3-hydroxydecanoyl-[acyl-carrier-protein] dehydratase, found in Escherichia coli (strain 55989 / EAEC).